Reading from the N-terminus, the 242-residue chain is ATP synthase subunit a (242 aa).

6 consecutive transmembrane segments (helical) span residues 29 to 49 (SSIY…LAFY), 84 to 104 (FIPL…LGMT), 114 to 134 (IIVT…VGFV), 140 to 160 (FLTL…MIVI), 189 to 209 (VIAG…IPLM), and 210 to 230 (VILI…FTIL).

The protein belongs to the ATPase A chain family. In terms of assembly, F-type ATPases have 2 components, CF(1) - the catalytic core - and CF(0) - the membrane proton channel. CF(1) has five subunits: alpha(3), beta(3), gamma(1), delta(1), epsilon(1). CF(0) has three main subunits: a(1), b(2) and c(9-12). The alpha and beta chains form an alternating ring which encloses part of the gamma chain. CF(1) is attached to CF(0) by a central stalk formed by the gamma and epsilon chains, while a peripheral stalk is formed by the delta and b chains.

The protein localises to the cell inner membrane. In terms of biological role, key component of the proton channel; it plays a direct role in the translocation of protons across the membrane. The sequence is that of ATP synthase subunit a from Rickettsia felis (strain ATCC VR-1525 / URRWXCal2) (Rickettsia azadi).